The primary structure comprises 1114 residues: WD repeat-containing protein 72 (1114 aa).

WD repeat units follow at residues 15-54 (APPHSITAIMITDDQQTIVTGSQEGQLCLWSLSPELKISA), 60-102 (GHSA…CVEK), 160-197 (KCMCIVHSVRIQEDSLLVVSITGELKVWDLSSSINSIQ), 327-373 (EENK…SKFD), 413-452 (GMTATITSSEYIPNLDKLICGCEDGTIFITKALNAAKAGL), 470-515 (GHHQ…ILHT), and 566-605 (KHLFPVRMIRWHPVENFLIVGCTDDSVYIWEIETGTLERH). Disordered stretches follow at residues 634–658 (SETHKHKSIEQKSSNSHQPGPVPCP) and 749–798 (SLQT…PPRK). A compositionally biased stretch (basic residues) spans 780–796 (KRQKKMKSSKKAHPKPP). Residues S1093 and S1095 each carry the phosphoserine modification.

Expressed in maturation stage ameloblasts (at protein level).

It localises to the cytoplasmic vesicle. Plays a major role in formation of tooth enamel. Specifically required during the maturation phase of amelogenesis for normal formation of the enamel matrix and clearance of enamel proteins. May be involved in localization of the calcium transporter SLC24A4 to the ameloblast cell membrane. This Mus musculus (Mouse) protein is WD repeat-containing protein 72.